Consider the following 444-residue polypeptide: uncharacterized protein (444 aa).

This is an uncharacterized protein from Saccharomyces cerevisiae (strain ATCC 204508 / S288c) (Baker's yeast).